The chain runs to 80 residues: Large ribosomal subunit protein bL31 (80 aa).

Residues Cys16, Cys18, Cys38, and Cys41 each contribute to the Zn(2+) site.

It belongs to the bacterial ribosomal protein bL31 family. Type A subfamily. As to quaternary structure, part of the 50S ribosomal subunit. Requires Zn(2+) as cofactor.

In terms of biological role, binds the 23S rRNA. In Rhodococcus jostii (strain RHA1), this protein is Large ribosomal subunit protein bL31.